Consider the following 320-residue polypeptide: Transmembrane protein 41 homolog (320 aa).

Positions 20–72 (GRAKALQEHSPDQVATPLLPQVPPQEQQDLNPQQQQQQQQQQQATPQKQAMSA) are disordered. Positions 43–68 (PQEQQDLNPQQQQQQQQQQQATPQKQ) are enriched in low complexity. 6 helical membrane-spanning segments follow: residues 83–103 (VIVA…YAIF), 141–161 (VMFG…PGSL), 173–195 (FPIA…YTLS), 225–242 (LFNY…PNWF), 245–265 (LASP…FCGV), and 289–309 (FSWT…LPGL).

Belongs to the TMEM41 family. In embryos, strongly expressed in the nervous system.

The protein resides in the membrane. Required in cholinergic neurons, but not in motor neurons, for normal neurotransmitter release by motor neurons. Involved in muscle growth. This chain is Transmembrane protein 41 homolog (stas), found in Drosophila melanogaster (Fruit fly).